We begin with the raw amino-acid sequence, 411 residues long: Inhibin beta B chain (411 aa).

The signal sequence occupies residues 1-28; that stretch reads MDGLPGRALGAACLLLLAAGWLGPEAWG. The disordered stretch occupies residues 27–69; the sequence is WGSPTPPPSPAAPPPPPPPGAPGGSQDTCTSCGGGGGGFRRPE. A propeptide spanning residues 29–296 is cleaved from the precursor; that stretch reads SPTPPPSPAA…GDSRHRIRKR (268 aa). Pro residues predominate over residues 30–47; sequence PTPPPSPAAPPPPPPPGA. Asn-97 carries N-linked (GlcNAc...) asparagine glycosylation. 4 cysteine pairs are disulfide-bonded: Cys-300-Cys-308, Cys-307-Cys-376, Cys-336-Cys-408, and Cys-340-Cys-410.

The protein belongs to the TGF-beta family. As to quaternary structure, dimeric, linked by one or more disulfide bonds. Inhibin B is a dimer of alpha and beta-B. Activin B is a homodimer of beta-B. Activin AB is a dimer of beta-A and beta-B. Interacts with FST and FSTL3. In terms of tissue distribution, alpha- and beta-B subunits are the predominant forms found in rat testis. Also expressed in ovary.

The protein resides in the secreted. Inhibins and activins inhibit and activate, respectively, the secretion of follitropin by the pituitary gland. Inhibins/activins are involved in regulating a number of diverse functions such as hypothalamic and pituitary hormone secretion, gonadal hormone secretion, germ cell development and maturation, erythroid differentiation, insulin secretion, nerve cell survival, embryonic axial development or bone growth, depending on their subunit composition. Inhibins appear to oppose the functions of activins. Its function is as follows. Activin B is a dimer of alpha and beta-B that plays a role in several essential biological processes including embryonic development, stem cell maintenance and differentiation, haematopoiesis, cell proliferation and wound healing. Signals through type I receptor ACVR1C, abundantly expressed in pancreatic beta cells, and type II receptors like ACVR2A. Upon ligand binding, these receptors phosphorylate intracellular signaling mediators SMAD2 and SMAD3, which form a complex with SMAD4, translocate to the nucleus, and regulate gene expression. Plays a crucial role in the induction of hepcidin by inflammation through activation of ACVR1C and subsequent phosphorylation of SMAD1/5/8. Regulates adipocyte lipid metabolism by decreasing non-esterified fatty acids and glycerol release and increases intracellular triglyceride content. Stimulates wound healing by promoting cell migration and hair follicle regeneration through the JNK and ERK signaling pathways downstream of RHOA. Functionally, inhibin B is a dimer of alpha and beta-B that plays a crucial role in the regulation of the reproductive system by inhibiting the secretion of follicle-stimulating hormone (FSH) from the anterior pituitary gland. Thereby, maintains reproductive homeostasis in both males and females. Acts as a more potent suppressor of FSH release than inhibin A. Functions as competitive receptor antagonist binding activin type II receptors with high affinity in the presence of the TGF-beta type III coreceptor/TGFBR3L. The sequence is that of Inhibin beta B chain (Inhbb) from Rattus norvegicus (Rat).